The sequence spans 409 residues: NADH-quinone oxidoreductase subunit D (409 aa).

The protein belongs to the complex I 49 kDa subunit family. NDH-1 is composed of 14 different subunits. Subunits NuoB, C, D, E, F, and G constitute the peripheral sector of the complex.

Its subcellular location is the cell inner membrane. The enzyme catalyses a quinone + NADH + 5 H(+)(in) = a quinol + NAD(+) + 4 H(+)(out). In terms of biological role, NDH-1 shuttles electrons from NADH, via FMN and iron-sulfur (Fe-S) centers, to quinones in the respiratory chain. The immediate electron acceptor for the enzyme in this species is believed to be ubiquinone. Couples the redox reaction to proton translocation (for every two electrons transferred, four hydrogen ions are translocated across the cytoplasmic membrane), and thus conserves the redox energy in a proton gradient. The sequence is that of NADH-quinone oxidoreductase subunit D from Campylobacter curvus (strain 525.92).